The following is a 612-amino-acid chain: Phosphoenolpyruvate carboxykinase [GTP] (612 aa).

Substrate-binding positions include Arg82 and 221 to 223 (YGG). Residues Lys230 and His250 each coordinate Mn(2+). Ser272 is a binding site for substrate. 273–278 (ACGKTN) provides a ligand contact to GTP. Cys274 is an active-site residue. A Mn(2+)-binding site is contributed by Asp297. Residue 388-390 (NSR) participates in substrate binding. Residues Arg390, Arg421, and 516-519 (FGEN) each bind GTP.

Belongs to the phosphoenolpyruvate carboxykinase [GTP] family. As to quaternary structure, monomer. It depends on Mn(2+) as a cofactor.

It is found in the cytoplasm. The catalysed reaction is oxaloacetate + GTP = phosphoenolpyruvate + GDP + CO2. Its pathway is carbohydrate biosynthesis; gluconeogenesis. In terms of biological role, catalyzes the conversion of oxaloacetate (OAA) to phosphoenolpyruvate (PEP), the rate-limiting step in the metabolic pathway that produces glucose from lactate and other precursors derived from the citric acid cycle. The chain is Phosphoenolpyruvate carboxykinase [GTP] from Corynebacterium efficiens (strain DSM 44549 / YS-314 / AJ 12310 / JCM 11189 / NBRC 100395).